The primary structure comprises 420 residues: UDP-N-acetylglucosamine 1-carboxyvinyltransferase (420 aa).

22-23 (KN) serves as a coordination point for phosphoenolpyruvate. Arg-93 lines the UDP-N-acetyl-alpha-D-glucosamine pocket. Cys-117 acts as the Proton donor in catalysis. At Cys-117 the chain carries 2-(S-cysteinyl)pyruvic acid O-phosphothioketal. Positions 307 and 329 each coordinate UDP-N-acetyl-alpha-D-glucosamine.

Belongs to the EPSP synthase family. MurA subfamily.

The protein resides in the cytoplasm. It carries out the reaction phosphoenolpyruvate + UDP-N-acetyl-alpha-D-glucosamine = UDP-N-acetyl-3-O-(1-carboxyvinyl)-alpha-D-glucosamine + phosphate. Its pathway is cell wall biogenesis; peptidoglycan biosynthesis. Its function is as follows. Cell wall formation. Adds enolpyruvyl to UDP-N-acetylglucosamine. The polypeptide is UDP-N-acetylglucosamine 1-carboxyvinyltransferase (Saccharophagus degradans (strain 2-40 / ATCC 43961 / DSM 17024)).